Consider the following 255-residue polypeptide: uncharacterized protein (255 aa).

Histidine 6, histidine 8, glutamate 92, histidine 128, histidine 153, and aspartate 203 together coordinate a divalent metal cation.

The protein belongs to the metallo-dependent hydrolases superfamily. TatD-type hydrolase family. The cofactor is a divalent metal cation.

This is an uncharacterized protein from Bacillus subtilis (strain 168).